A 199-amino-acid polypeptide reads, in one-letter code: Golgi to ER traffic protein 1 (199 aa).

Over 1–11 (MLLPDLHPYTI) the chain is Lumenal. Residues 12 to 31 (LLSIFLVLVVKQLVATIGKS) form a helical membrane-spanning segment. Residues 32-115 (TIQEFVWLVY…SIDKASNALI (84 aa)) lie on the Cytoplasmic side of the membrane. Residues 76–116 (YAKWTKLNRQADKLSAELQKLNQEIQQQKSSIDKASNALIL) are a coiled coil. The chain crosses the membrane as a helical span at residues 116-136 (LVLTTLPIWIARVFYRKTHLF). Residues 137–160 (YIRQGIFPKYVEWVLALPFLPNGA) lie on the Lumenal side of the membrane. A helical membrane pass occupies residues 161-177 (VGLTIWMFAVNSVVSNF). Residues 178 to 199 (SFLVSFPFAKRVSKPVRDTKVE) lie on the Cytoplasmic side of the membrane.

Belongs to the WRB/GET1 family. Component of the Golgi to ER traffic (GET) complex, which is composed of GET1, GET2 and GET3. Within the complex, GET1 and GET2 form a heterotetramer which is stabilized by phosphatidylinositol binding and which binds to the GET3 homodimer.

It localises to the endoplasmic reticulum membrane. Its subcellular location is the golgi apparatus membrane. In terms of biological role, required for the post-translational delivery of tail-anchored (TA) proteins to the endoplasmic reticulum. Together with GET2, acts as a membrane receptor for soluble GET3, which recognizes and selectively binds the transmembrane domain of TA proteins in the cytosol. The GET complex cooperates with the HDEL receptor ERD2 to mediate the ATP-dependent retrieval of resident ER proteins that contain a C-terminal H-D-E-L retention signal from the Golgi to the ER. The protein is Golgi to ER traffic protein 1 of Candida albicans (strain WO-1) (Yeast).